We begin with the raw amino-acid sequence, 516 residues long: Bifunctional purine biosynthesis protein PurH (516 aa).

The MGS-like domain occupies 1–149; that stretch reads MSERQPIRRA…KNHANVAVLT (149 aa).

This sequence belongs to the PurH family.

It carries out the reaction (6R)-10-formyltetrahydrofolate + 5-amino-1-(5-phospho-beta-D-ribosyl)imidazole-4-carboxamide = 5-formamido-1-(5-phospho-D-ribosyl)imidazole-4-carboxamide + (6S)-5,6,7,8-tetrahydrofolate. It catalyses the reaction IMP + H2O = 5-formamido-1-(5-phospho-D-ribosyl)imidazole-4-carboxamide. Its pathway is purine metabolism; IMP biosynthesis via de novo pathway; 5-formamido-1-(5-phospho-D-ribosyl)imidazole-4-carboxamide from 5-amino-1-(5-phospho-D-ribosyl)imidazole-4-carboxamide (10-formyl THF route): step 1/1. The protein operates within purine metabolism; IMP biosynthesis via de novo pathway; IMP from 5-formamido-1-(5-phospho-D-ribosyl)imidazole-4-carboxamide: step 1/1. This is Bifunctional purine biosynthesis protein PurH from Cutibacterium acnes (strain DSM 16379 / KPA171202) (Propionibacterium acnes).